The following is a 343-amino-acid chain: Glucokinase (343 aa).

Position 18-23 (18-23 (GDIGGT)) interacts with ATP.

Belongs to the bacterial glucokinase family.

The protein resides in the cytoplasm. The catalysed reaction is D-glucose + ATP = D-glucose 6-phosphate + ADP + H(+). The sequence is that of Glucokinase from Brucella suis biovar 1 (strain 1330).